A 540-amino-acid chain; its full sequence is MPAAPECRLSNHGRIMKCVTFLLLLPETLKKLKRASKHPGRLSVCYNILTLSLKKRMAAELYPVSDHATLQKSGAVMLSLPEKKRNVEPVSQTTASIATTPTTEQNINNNNVEIPSWHSAHPTLRERNALMFNNEQMADVHFIVGPPGESQRVPAHKYVLAVGSSVFCAMFYGDLAEGDSDIHIPDVEPAAFLILLKYMYSDEIELAPDTVLATLYAAKKYLVSALARACVGFLETSLEARNACVLLSQSRLFEEPELTQRCWEVIDAQAELALRSEGFSEIDLPTLESILHRETLNVKESVVFQAVLGWADAECRRQGLSPTSQNQRSVLGKALHLVRLPSMTLQEFADGAAQVDILTLEETHSIFLWYTAATKPSLGFPVNAREGLTAQRCHRFQSSAYRSNQWRYRGRCDSIQFAVDKRVFIAGLGLYGSSGGKAEYSVRIELKRQGVLLAQNLTKFVSDGSSSTFPVWFEHPVQVEQDAFYTVSAVLDGSELSYFGQEGMTEVQCGKVTFQFQCSSDSTNGTGVQGGQIPELIFYA.

Positions 138–208 constitute a BTB domain; it reads ADVHFIVGPP…MYSDEIELAP (71 aa).

In terms of assembly, interacts with cul3. Interacts (via BTB domain) with zbtb16/plzf. In terms of tissue distribution, expressed in the developing central nervous system.

Its subcellular location is the cytoplasm. The protein resides in the nucleus. Its function is as follows. Adapter protein for the cul3 E3 ubiquitin-protein ligase complex. Promotes the export of zbtb16/plzf from the nucleus to the cytoplasm and targets zbtb16/plzf for ubiquitination and degradation. Up-regulates neurog1 expression and antagonizes zbtb16/plzf, to promote neurogenesis. This is BTB/POZ domain-containing protein 6-A (btbd6a) from Danio rerio (Zebrafish).